The primary structure comprises 156 residues: Small ribosomal subunit protein uS7 (156 aa).

The protein belongs to the universal ribosomal protein uS7 family. As to quaternary structure, part of the 30S ribosomal subunit. Contacts proteins S9 and S11.

Functionally, one of the primary rRNA binding proteins, it binds directly to 16S rRNA where it nucleates assembly of the head domain of the 30S subunit. Is located at the subunit interface close to the decoding center, probably blocks exit of the E-site tRNA. This Ligilactobacillus salivarius (strain UCC118) (Lactobacillus salivarius) protein is Small ribosomal subunit protein uS7.